The primary structure comprises 185 residues: Large ribosomal subunit protein uL5 (185 aa).

This sequence belongs to the universal ribosomal protein uL5 family. Part of the 50S ribosomal subunit; contacts the 5S rRNA and probably tRNA. Forms a bridge to the 30S subunit in the 70S ribosome.

Its function is as follows. This is one of the proteins that bind and probably mediate the attachment of the 5S RNA into the large ribosomal subunit, where it forms part of the central protuberance. In the 70S ribosome it contacts protein S13 of the 30S subunit (bridge B1b), connecting the 2 subunits; this bridge is implicated in subunit movement. May contact the P site tRNA; the 5S rRNA and some of its associated proteins might help stabilize positioning of ribosome-bound tRNAs. The protein is Large ribosomal subunit protein uL5 of Haloquadratum walsbyi (strain DSM 16790 / HBSQ001).